Consider the following 216-residue polypeptide: UPF0502 protein Pfl01_3711 (216 aa).

This sequence belongs to the UPF0502 family.

This is UPF0502 protein Pfl01_3711 from Pseudomonas fluorescens (strain Pf0-1).